The sequence spans 184 residues: Adenine phosphoribosyltransferase (184 aa).

This sequence belongs to the purine/pyrimidine phosphoribosyltransferase family. As to quaternary structure, homodimer.

It is found in the cytoplasm. It catalyses the reaction AMP + diphosphate = 5-phospho-alpha-D-ribose 1-diphosphate + adenine. It participates in purine metabolism; AMP biosynthesis via salvage pathway; AMP from adenine: step 1/1. In terms of biological role, catalyzes a salvage reaction resulting in the formation of AMP, that is energically less costly than de novo synthesis. The polypeptide is Adenine phosphoribosyltransferase (Acidovorax sp. (strain JS42)).